Here is a 562-residue protein sequence, read N- to C-terminus: MENIRSFMSFPESRKVYIEGSRPDVRVPMREIALSPTKTPQGMVENKPVRVYDTTGPYTDPDFEPDVEKGLPPLRRRWIVERGDVEEMERSSVAIQRSLPFVRRPLRAKPGKTVTQMHYAKRGIITPEMEFVAIREQIDPEIVRQEVAAGRAIIPANINHPESEPMIIGRRFHVKINANIGNSAVSSSIEDEVEKLLWAVRWGADTVMDLSTGKHIHETREYIIRNSPVPVGTVPIYQALEKVGGVPEKLTWDVYRETLIEQAEQGVDYMTIHAGVRLHYIPLTANRTTGIVSRGGSIIAQWCLAHHEENFLYTHFEEICEILKQYDVAISLGDGLRPGSIADANDEAQFAELKTLGELTKIAWKHDVQVMIEGPGHIPMHKIRENVEREQEICHGAPFYTLGPLVTDIAPGYDHITSAIGAAIIGAYGTAMLCYVTPKEHLGLPNKEDVRAGVVAYKIAAHAADLAKGHPAAQQRDDALSKARFEFRWNDQFNLSLDPERAREYHDETLPAEAAKTAHFCSMCGPKFCSMNISHELQRKIKEEGMKEKAQQFIRQGSSLYQ.

Substrate-binding positions include N179, M208, Y237, H273, 293–295 (SRG), 334–337 (DGLR), and E373. H377 is a Zn(2+) binding site. Y400 provides a ligand contact to substrate. H441 contributes to the Zn(2+) binding site. [4Fe-4S] cluster contacts are provided by C521, C524, and C529.

Belongs to the ThiC family. The cofactor is [4Fe-4S] cluster.

It carries out the reaction 5-amino-1-(5-phospho-beta-D-ribosyl)imidazole + S-adenosyl-L-methionine = 4-amino-2-methyl-5-(phosphooxymethyl)pyrimidine + CO + 5'-deoxyadenosine + formate + L-methionine + 3 H(+). It functions in the pathway cofactor biosynthesis; thiamine diphosphate biosynthesis. In terms of biological role, catalyzes the synthesis of the hydroxymethylpyrimidine phosphate (HMP-P) moiety of thiamine from aminoimidazole ribotide (AIR) in a radical S-adenosyl-L-methionine (SAM)-dependent reaction. The chain is Phosphomethylpyrimidine synthase from Geobacillus kaustophilus (strain HTA426).